A 231-amino-acid chain; its full sequence is 5'-methylthioadenosine/S-adenosylhomocysteine nucleosidase (231 aa).

The active-site Proton acceptor is Glu12. Residues Gly78, Met153, and 174–175 (ME) each bind substrate. Asp198 serves as the catalytic Proton donor.

Belongs to the PNP/UDP phosphorylase family. MtnN subfamily.

The catalysed reaction is S-adenosyl-L-homocysteine + H2O = S-(5-deoxy-D-ribos-5-yl)-L-homocysteine + adenine. It catalyses the reaction S-methyl-5'-thioadenosine + H2O = 5-(methylsulfanyl)-D-ribose + adenine. The enzyme catalyses 5'-deoxyadenosine + H2O = 5-deoxy-D-ribose + adenine. The protein operates within amino-acid biosynthesis; L-methionine biosynthesis via salvage pathway; S-methyl-5-thio-alpha-D-ribose 1-phosphate from S-methyl-5'-thioadenosine (hydrolase route): step 1/2. Functionally, catalyzes the irreversible cleavage of the glycosidic bond in both 5'-methylthioadenosine (MTA) and S-adenosylhomocysteine (SAH/AdoHcy) to adenine and the corresponding thioribose, 5'-methylthioribose and S-ribosylhomocysteine, respectively. Also cleaves 5'-deoxyadenosine, a toxic by-product of radical S-adenosylmethionine (SAM) enzymes, into 5-deoxyribose and adenine. The chain is 5'-methylthioadenosine/S-adenosylhomocysteine nucleosidase from Bacillus pumilus (strain SAFR-032).